Consider the following 154-residue polypeptide: Neurotrophin-3 (154 aa).

A signal peptide spans 1 to 18 (MSILFYVMFLAYLRGVQG). A propeptide spanning residues 19–134 (NSMDQRSLPE…VNSRSPRRKR (116 aa)) is cleaved from the precursor.

The protein belongs to the NGF-beta family.

It is found in the secreted. Functionally, seems to promote the survival of visceral and proprioceptive sensory neurons. This is Neurotrophin-3 (NTF3) from Cervus elaphus (Red deer).